A 226-amino-acid chain; its full sequence is Ribosome maturation factor RimM (226 aa).

The 82-residue stretch at 144–225 (ADEFYWVDLI…RIVVDWEADY (82 aa)) folds into the PRC barrel domain.

Belongs to the RimM family. As to quaternary structure, binds ribosomal protein uS19.

It localises to the cytoplasm. Its function is as follows. An accessory protein needed during the final step in the assembly of 30S ribosomal subunit, possibly for assembly of the head region. Essential for efficient processing of 16S rRNA. May be needed both before and after RbfA during the maturation of 16S rRNA. It has affinity for free ribosomal 30S subunits but not for 70S ribosomes. In Burkholderia ambifaria (strain ATCC BAA-244 / DSM 16087 / CCUG 44356 / LMG 19182 / AMMD) (Burkholderia cepacia (strain AMMD)), this protein is Ribosome maturation factor RimM.